Reading from the N-terminus, the 599-residue chain is Cytosolic Fe-S cluster assembly factor nar1 (599 aa).

C20, C62, C65, C68, C210, C265, C468, and C472 together coordinate [4Fe-4S] cluster.

Belongs to the NARF family.

Its function is as follows. Component of the cytosolic Fe/S protein assembly machinery. Required for maturation of extramitochondrial Fe/S proteins. May play a role in the transfer of pre-assembled Fe/S clusters to target apoproteins. The protein is Cytosolic Fe-S cluster assembly factor nar1 (nar1) of Aspergillus terreus (strain NIH 2624 / FGSC A1156).